The chain runs to 375 residues: Tryptophan dimethylallyltransferase (375 aa).

Residues 83 to 84 and Glu-92 contribute to the L-tryptophan site; that span reads IL. Arg-103, Lys-189, and Tyr-191 together coordinate substrate. Positions 193 and 246 each coordinate L-tryptophan. Substrate is bound by residues Arg-259, Lys-261, Tyr-263, Gln-345, and Tyr-347.

Belongs to the tryptophan dimethylallyltransferase family. Homodimer.

It carries out the reaction L-tryptophan + dimethylallyl diphosphate = 4-(3-methylbut-2-enyl)-L-tryptophan + diphosphate. The protein operates within alkaloid biosynthesis; ergot alkaloid biosynthesis. In terms of biological role, tryptophan dimethylallyltransferase; part of the gene cluster that mediates the biosynthesis of fungal ergot alkaloid. DmaW catalyzes the first step of ergot alkaloid biosynthesis by condensing dimethylallyl diphosphate (DMAP) and tryptophan to form 4-dimethylallyl-L-tryptophan. The second step is catalyzed by the methyltransferase easF that methylates 4-dimethylallyl-L-tryptophan in the presence of S-adenosyl-L-methionine, resulting in the formation of 4-dimethylallyl-L-abrine. The catalase easC and the FAD-dependent oxidoreductase easE then transform 4-dimethylallyl-L-abrine to chanoclavine-I which is further oxidized by easD in the presence of NAD(+), resulting in the formation of chanoclavine-I aldehyde. Chanoclavine-I aldehyde is the precursor of ergoamides and ergopeptines in Clavicipitaceae, and clavine-type alcaloids such as fumiclavine in Trichocomaceae. However, the metabolites downstream of chanoclavine-I aldehyde in Arthrodermataceae have not been identified yet. This Trichophyton verrucosum (strain HKI 0517) protein is Tryptophan dimethylallyltransferase.